The sequence spans 440 residues: UDP-N-acetylmuramoylalanine--D-glutamate ligase (440 aa).

115–121 (GSNGKST) is an ATP binding site.

It belongs to the MurCDEF family.

The protein localises to the cytoplasm. It carries out the reaction UDP-N-acetyl-alpha-D-muramoyl-L-alanine + D-glutamate + ATP = UDP-N-acetyl-alpha-D-muramoyl-L-alanyl-D-glutamate + ADP + phosphate + H(+). It functions in the pathway cell wall biogenesis; peptidoglycan biosynthesis. Functionally, cell wall formation. Catalyzes the addition of glutamate to the nucleotide precursor UDP-N-acetylmuramoyl-L-alanine (UMA). The chain is UDP-N-acetylmuramoylalanine--D-glutamate ligase from Vibrio cholerae serotype O1 (strain ATCC 39315 / El Tor Inaba N16961).